A 424-amino-acid chain; its full sequence is MASQKPHLNLITIGHVDHGKSTLVGRLLYEHGEIPAHIIEEYRKEAEQKGKATFEFAWVMDRFKEERERGVTIDLAHRKFETDKYYFTLIDAPGHRDFVKNMITGTSQADAAILVISAREGEGVMEQTREHAFLARTLGVPQMVVAINKMDATSPPYSEKRYNEVKADAEKLLRSIGFKDISFVPISGYKGDNVTKPSPNMPWYKGPTLLQALDAFKVPEKPINKPLRIPVEDVYSITGIGTVPVGRVETGVLKPGDKVIFLPADKQGDVKSIEMHHEPLQQAEPGDNIGFNVRGIAKNDIKRGDVCGHLDTPPTVVKAFTAQIIVLNHPSVIAPGYKPVFHVHTAQVACRIDEIVKTLNPKDGTTLKEKPDFIKNGDVAIVKVIPDKPLVIEKVSEIPQLGRFAVRDMGQTVAAGQCIDLEKR.

In terms of domain architecture, tr-type G spans 5-223 (KPHLNLITIG…DAFKVPEKPI (219 aa)). The tract at residues 14 to 21 (GHVDHGKS) is G1. GTP is bound at residue 14 to 21 (GHVDHGKS). Residue Ser21 participates in Mg(2+) binding. The interval 70-74 (GVTID) is G2. The tract at residues 91–94 (DAPG) is G3. GTP-binding positions include 91 to 95 (DAPGH) and 148 to 151 (NKMD). The G4 stretch occupies residues 148–151 (NKMD). The tract at residues 187-189 (SGY) is G5.

It belongs to the TRAFAC class translation factor GTPase superfamily. Classic translation factor GTPase family. EF-Tu/EF-1A subfamily.

The protein localises to the cytoplasm. The catalysed reaction is GTP + H2O = GDP + phosphate + H(+). Functionally, GTP hydrolase that promotes the GTP-dependent binding of aminoacyl-tRNA to the A-site of ribosomes during protein biosynthesis. The polypeptide is Elongation factor 1-alpha (Thermoplasma acidophilum (strain ATCC 25905 / DSM 1728 / JCM 9062 / NBRC 15155 / AMRC-C165)).